We begin with the raw amino-acid sequence, 609 residues long: Glutamine--fructose-6-phosphate aminotransferase [isomerizing] (609 aa).

Catalysis depends on cysteine 2, which acts as the Nucleophile; for GATase activity. Residues 2–218 (CGIVGAIAQR…EGDIAEITRR (217 aa)) enclose the Glutamine amidotransferase type-2 domain. 2 consecutive SIS domains span residues 286-426 (ADEL…LKGL) and 458-599 (LAED…VDQP). Lysine 604 acts as the For Fru-6P isomerization activity in catalysis.

In terms of assembly, homodimer.

The protein resides in the cytoplasm. It catalyses the reaction D-fructose 6-phosphate + L-glutamine = D-glucosamine 6-phosphate + L-glutamate. In terms of biological role, catalyzes the first step in hexosamine metabolism, converting fructose-6P into glucosamine-6P using glutamine as a nitrogen source. This Salmonella paratyphi A (strain ATCC 9150 / SARB42) protein is Glutamine--fructose-6-phosphate aminotransferase [isomerizing].